Here is a 519-residue protein sequence, read N- to C-terminus: Ent-kaurene oxidase (519 aa).

The Chloroplast intermembrane portion of the chain corresponds to 1–10 (MDTLLSLQAV). A helical transmembrane segment spans residues 11–31 (PAAAAIGGPVVAIGGITLFFI). Residues 32 to 519 (REYVKDQRKK…PRLRDRVCVS (488 aa)) are Cytoplasmic-facing. A heme-binding site is contributed by Cys458.

This sequence belongs to the cytochrome P450 family. The cofactor is heme.

It is found in the plastid. The protein localises to the chloroplast outer membrane. The catalysed reaction is ent-kaur-16-ene + 3 reduced [NADPH--hemoprotein reductase] + 3 O2 = ent-kaur-16-en-19-oate + 3 oxidized [NADPH--hemoprotein reductase] + 4 H2O + 4 H(+). It functions in the pathway plant hormone biosynthesis; gibberellin biosynthesis. Catalyzes three successive oxidations of the 4-methyl group of ent-kaurene giving kaurenoic acid, a key step in gibberellins (GAs) biosynthesis. GAs, which are involved many processes, including stem elongation, play a central role in plant development. This Salvia miltiorrhiza (Chinese sage) protein is Ent-kaurene oxidase.